Consider the following 329-residue polypeptide: Glycerol-3-phosphate dehydrogenase [NAD(P)+] (329 aa).

3 residues coordinate NADPH: Trp15, His35, and Lys107. 3 residues coordinate sn-glycerol 3-phosphate: Lys107, Gly135, and Ser137. Ala139 is a binding site for NADPH. Sn-glycerol 3-phosphate is bound by residues Lys190, Asp243, Ser253, Arg254, and Asn255. The Proton acceptor role is filled by Lys190. Arg254 serves as a coordination point for NADPH. NADPH-binding residues include Leu276 and Glu278.

Belongs to the NAD-dependent glycerol-3-phosphate dehydrogenase family.

It is found in the cytoplasm. The catalysed reaction is sn-glycerol 3-phosphate + NAD(+) = dihydroxyacetone phosphate + NADH + H(+). The enzyme catalyses sn-glycerol 3-phosphate + NADP(+) = dihydroxyacetone phosphate + NADPH + H(+). It functions in the pathway membrane lipid metabolism; glycerophospholipid metabolism. Catalyzes the reduction of the glycolytic intermediate dihydroxyacetone phosphate (DHAP) to sn-glycerol 3-phosphate (G3P), the key precursor for phospholipid synthesis. The polypeptide is Glycerol-3-phosphate dehydrogenase [NAD(P)+] (Rhodopseudomonas palustris (strain TIE-1)).